A 496-amino-acid chain; its full sequence is Lysine--tRNA ligase (496 aa).

Mg(2+) is bound by residues Glu409 and Glu416.

It belongs to the class-II aminoacyl-tRNA synthetase family. As to quaternary structure, homodimer. Mg(2+) is required as a cofactor.

It is found in the cytoplasm. It carries out the reaction tRNA(Lys) + L-lysine + ATP = L-lysyl-tRNA(Lys) + AMP + diphosphate. The protein is Lysine--tRNA ligase of Streptococcus pneumoniae (strain CGSP14).